Reading from the N-terminus, the 329-residue chain is Acetyl-coenzyme A carboxylase carboxyl transferase subunit alpha (329 aa).

The region spanning Gln40–Gln294 is the CoA carboxyltransferase C-terminal domain.

This sequence belongs to the AccA family. As to quaternary structure, acetyl-CoA carboxylase is a heterohexamer composed of biotin carboxyl carrier protein (AccB), biotin carboxylase (AccC) and two subunits each of ACCase subunit alpha (AccA) and ACCase subunit beta (AccD).

The protein localises to the cytoplasm. It carries out the reaction N(6)-carboxybiotinyl-L-lysyl-[protein] + acetyl-CoA = N(6)-biotinyl-L-lysyl-[protein] + malonyl-CoA. It functions in the pathway lipid metabolism; malonyl-CoA biosynthesis; malonyl-CoA from acetyl-CoA: step 1/1. Functionally, component of the acetyl coenzyme A carboxylase (ACC) complex. First, biotin carboxylase catalyzes the carboxylation of biotin on its carrier protein (BCCP) and then the CO(2) group is transferred by the carboxyltransferase to acetyl-CoA to form malonyl-CoA. This Synechococcus sp. (strain CC9605) protein is Acetyl-coenzyme A carboxylase carboxyl transferase subunit alpha.